We begin with the raw amino-acid sequence, 220 residues long: Guanylate kinase (220 aa).

The Guanylate kinase-like domain maps to 15–194 (GLMLVISSPS…ALDAVQSIVK (180 aa)). 22 to 29 (SPSGAGKS) serves as a coordination point for ATP.

Belongs to the guanylate kinase family.

It localises to the cytoplasm. The enzyme catalyses GMP + ATP = GDP + ADP. Essential for recycling GMP and indirectly, cGMP. The protein is Guanylate kinase of Rhizobium johnstonii (strain DSM 114642 / LMG 32736 / 3841) (Rhizobium leguminosarum bv. viciae).